The chain runs to 516 residues: Bifunctional purine biosynthesis protein PurH (516 aa).

An MGS-like domain is found at 1–146 (MTRLALLSVS…KNYAHVTVLS (146 aa)).

It belongs to the PurH family.

The catalysed reaction is (6R)-10-formyltetrahydrofolate + 5-amino-1-(5-phospho-beta-D-ribosyl)imidazole-4-carboxamide = 5-formamido-1-(5-phospho-D-ribosyl)imidazole-4-carboxamide + (6S)-5,6,7,8-tetrahydrofolate. It catalyses the reaction IMP + H2O = 5-formamido-1-(5-phospho-D-ribosyl)imidazole-4-carboxamide. It functions in the pathway purine metabolism; IMP biosynthesis via de novo pathway; 5-formamido-1-(5-phospho-D-ribosyl)imidazole-4-carboxamide from 5-amino-1-(5-phospho-D-ribosyl)imidazole-4-carboxamide (10-formyl THF route): step 1/1. It participates in purine metabolism; IMP biosynthesis via de novo pathway; IMP from 5-formamido-1-(5-phospho-D-ribosyl)imidazole-4-carboxamide: step 1/1. This Rippkaea orientalis (strain PCC 8801 / RF-1) (Cyanothece sp. (strain PCC 8801)) protein is Bifunctional purine biosynthesis protein PurH.